The following is a 139-amino-acid chain: Small ribosomal subunit protein uS12 (139 aa).

Residues 118 to 139 (AGVANRNQSRSRYGTKKPKPKS) are disordered. Residues 130 to 139 (YGTKKPKPKS) show a composition bias toward basic residues.

Belongs to the universal ribosomal protein uS12 family. Part of the 30S ribosomal subunit. Contacts proteins S8 and S17. May interact with IF1 in the 30S initiation complex.

Functionally, with S4 and S5 plays an important role in translational accuracy. Interacts with and stabilizes bases of the 16S rRNA that are involved in tRNA selection in the A site and with the mRNA backbone. Located at the interface of the 30S and 50S subunits, it traverses the body of the 30S subunit contacting proteins on the other side and probably holding the rRNA structure together. The combined cluster of proteins S8, S12 and S17 appears to hold together the shoulder and platform of the 30S subunit. This is Small ribosomal subunit protein uS12 from Mycoplasma mobile (strain ATCC 43663 / 163K / NCTC 11711) (Mesomycoplasma mobile).